The sequence spans 190 residues: UPF0340 protein BC_5317 (190 aa).

It belongs to the UPF0340 family.

The polypeptide is UPF0340 protein BC_5317 (Bacillus cereus (strain ATCC 14579 / DSM 31 / CCUG 7414 / JCM 2152 / NBRC 15305 / NCIMB 9373 / NCTC 2599 / NRRL B-3711)).